Here is a 131-residue protein sequence, read N- to C-terminus: Small ribosomal subunit protein eS6 (131 aa).

It belongs to the eukaryotic ribosomal protein eS6 family.

This is Small ribosomal subunit protein eS6 from Halobacterium salinarum (strain ATCC 29341 / DSM 671 / R1).